Here is a 614-residue protein sequence, read N- to C-terminus: 2-succinyl-5-enolpyruvyl-6-hydroxy-3-cyclohexene-1-carboxylate synthase (614 aa).

Belongs to the TPP enzyme family. MenD subfamily. Homodimer. It depends on Mg(2+) as a cofactor. The cofactor is Mn(2+). Requires thiamine diphosphate as cofactor.

The enzyme catalyses isochorismate + 2-oxoglutarate + H(+) = 5-enolpyruvoyl-6-hydroxy-2-succinyl-cyclohex-3-ene-1-carboxylate + CO2. It functions in the pathway quinol/quinone metabolism; 1,4-dihydroxy-2-naphthoate biosynthesis; 1,4-dihydroxy-2-naphthoate from chorismate: step 2/7. Its pathway is quinol/quinone metabolism; menaquinone biosynthesis. Catalyzes the thiamine diphosphate-dependent decarboxylation of 2-oxoglutarate and the subsequent addition of the resulting succinic semialdehyde-thiamine pyrophosphate anion to isochorismate to yield 2-succinyl-5-enolpyruvyl-6-hydroxy-3-cyclohexene-1-carboxylate (SEPHCHC). This is 2-succinyl-5-enolpyruvyl-6-hydroxy-3-cyclohexene-1-carboxylate synthase from Sorangium cellulosum (strain So ce56) (Polyangium cellulosum (strain So ce56)).